A 374-amino-acid polypeptide reads, in one-letter code: Anthranilate O-methyltransferase 2 (374 aa).

Tyr-18 is a binding site for S-adenosyl-L-homocysteine. Gln-25 is an anthranilate binding site. Residues Cys-59, Asn-64, Asp-98, Leu-99, Ser-142, and Tyr-143 each contribute to the S-adenosyl-L-homocysteine site. An anthranilate-binding site is contributed by Trp-164. Residues Glu-261 and Phe-263 each contribute to the Mg(2+) site.

It belongs to the methyltransferase superfamily. Type-7 methyltransferase family. SABATH subfamily.

The enzyme catalyses anthranilate + S-adenosyl-L-methionine = O-methyl anthranilate + S-adenosyl-L-homocysteine. Methyltransferase involved in the biosynthesis of methyl anthranilate in response to stresses. Utilizes anthranilic acid as substrate. Produces exclusively the O-methyl ester. This is Anthranilate O-methyltransferase 2 (AAMT2) from Zea mays (Maize).